The primary structure comprises 132 residues: uncharacterized protein (132 aa).

Positions 1–19 are cleaved as a signal peptide; that stretch reads MKKALFLVGLVFTAGVISS. Residue C20 is the site of N-palmitoyl cysteine attachment. A lipid anchor (S-diacylglycerol cysteine) is attached at C20.

Its subcellular location is the cell membrane. This is an uncharacterized protein from Aquifex aeolicus (strain VF5).